The sequence spans 321 residues: Fibronectin type III domain-containing protein 8 (321 aa).

Residues 175–277 (VPEAPFVCEH…KPYKFATVAT (103 aa)) enclose the Fibronectin type-III domain.

In Bos taurus (Bovine), this protein is Fibronectin type III domain-containing protein 8 (FNDC8).